The sequence spans 227 residues: Zinc finger protein ZAT10 (227 aa).

The C2H2-type 1 zinc-finger motif lies at 80-102; it reads YKCSVCDKTFSSYQALGGHKASH. The tract at residues 96-128 is disordered; it reads GGHKASHRKNLSQTLSGGGDDHSTSSATTTSAV. The span at 119-128 shows a compositional bias: low complexity; that stretch reads TSSATTTSAV. Residues 136–158 form a C2H2-type 2 zinc finger; it reads HVCTICNKSFPSGQALGGHKRCH. The interval 168–189 is disordered; that stretch reads SSVSNSEGAGSTSHVSSSHRGF. Over residues 174–186 the composition is skewed to polar residues; that stretch reads EGAGSTSHVSSSH.

Expressed in roots, stems and leaves.

It is found in the nucleus. Functionally, transcriptional repressor involved in abiotic stress responses. Can repress the stress responsive genes DREB1A and LTI78. Probably involved in jasmonate (JA) early signaling response. May regulate the expression of the JA biosynthesis gene LOX3 and control the expression of TIFY10A/JAZ1, a key repressor in the JA signaling cascade. The protein is Zinc finger protein ZAT10 (ZAT10) of Arabidopsis thaliana (Mouse-ear cress).